We begin with the raw amino-acid sequence, 120 residues long: NAD(P)H-quinone oxidoreductase subunit 3, chloroplastic (120 aa).

3 helical membrane passes run 9–29 (YFWLFLLLASLIPPVASPISS), 64–84 (MFASVFVISDAETVSLYPWAM), and 89–109 (LGVPASAEASISVTIPIVGSV).

It belongs to the complex I subunit 3 family. NDH is composed of at least 16 different subunits, 5 of which are encoded in the nucleus.

Its subcellular location is the plastid. The protein resides in the chloroplast thylakoid membrane. The catalysed reaction is a plastoquinone + NADH + (n+1) H(+)(in) = a plastoquinol + NAD(+) + n H(+)(out). It catalyses the reaction a plastoquinone + NADPH + (n+1) H(+)(in) = a plastoquinol + NADP(+) + n H(+)(out). Its function is as follows. NDH shuttles electrons from NAD(P)H:plastoquinone, via FMN and iron-sulfur (Fe-S) centers, to quinones in the photosynthetic chain and possibly in a chloroplast respiratory chain. The immediate electron acceptor for the enzyme in this species is believed to be plastoquinone. Couples the redox reaction to proton translocation, and thus conserves the redox energy in a proton gradient. This chain is NAD(P)H-quinone oxidoreductase subunit 3, chloroplastic, found in Huperzia lucidula (Shining clubmoss).